The chain runs to 154 residues: Ribonuclease H (154 aa).

Residues 5–146 (EQNIVYLYCD…ADELANRGID (142 aa)) enclose the RNase H type-1 domain. Positions 14, 52, 74, and 138 each coordinate Mg(2+).

The protein belongs to the RNase H family. Monomer. Mg(2+) serves as cofactor.

It is found in the cytoplasm. It catalyses the reaction Endonucleolytic cleavage to 5'-phosphomonoester.. Endonuclease that specifically degrades the RNA of RNA-DNA hybrids. The protein is Ribonuclease H of Coxiella burnetii (strain CbuG_Q212) (Coxiella burnetii (strain Q212)).